The following is a 144-amino-acid chain: Complexin-1 (144 aa).

A compositionally biased stretch (gly residues) spans 1 to 10 (MVSFLGGGLL). The disordered stretch occupies residues 1–119 (MVSFLGGGLL…SGFPKNLDDL (119 aa)). 2 stretches are compositionally biased toward basic and acidic residues: residues 18–27 (LEEKEDKKEG) and 36–86 (AEAK…EGRL). Residues 29–67 (EEEDPEIAEAKREAEEKRNEKYRKMEEEREVMRQGIRDK) adopt a coiled-coil conformation. Positions 103-112 (LQSSAQSSGF) are enriched in polar residues. Position 141 is a cysteine methyl ester (Cys-141). The S-farnesyl cysteine moiety is linked to residue Cys-141. Positions 142-144 (NLQ) are cleaved as a propeptide — removed in mature form.

It belongs to the complexin/synaphin family. In terms of assembly, binds to the SNARE core complex containing SNAP25, synaptobrevin and syntaxin-1. As to expression, expressed in a subset of neurons in the central nervous system, including large serotoninergic Retzius neurons and pressure-sensitive P cells.

Its subcellular location is the membrane. Functionally, positively regulates a late step in synaptic vesicle exocytosis. This chain is Complexin-1 (cpx1), found in Hirudo medicinalis (Medicinal leech).